A 610-amino-acid chain; its full sequence is UvrABC system protein C (610 aa).

Residues 16–94 (SQPGVYRMYD…IKLYQPRYNV (79 aa)) enclose the GIY-YIG domain. Positions 204-239 (DQVLTQLISRMETASQNLEFEEAARIRDQIQAVRRV) constitute a UVR domain.

It belongs to the UvrC family. In terms of assembly, interacts with UvrB in an incision complex.

The protein resides in the cytoplasm. In terms of biological role, the UvrABC repair system catalyzes the recognition and processing of DNA lesions. UvrC both incises the 5' and 3' sides of the lesion. The N-terminal half is responsible for the 3' incision and the C-terminal half is responsible for the 5' incision. This chain is UvrABC system protein C, found in Shigella boydii serotype 18 (strain CDC 3083-94 / BS512).